The chain runs to 341 residues: UDP-3-O-acylglucosamine N-acyltransferase (341 aa).

The active-site Proton acceptor is His-241.

This sequence belongs to the transferase hexapeptide repeat family. LpxD subfamily. Homotrimer.

It carries out the reaction a UDP-3-O-[(3R)-3-hydroxyacyl]-alpha-D-glucosamine + a (3R)-hydroxyacyl-[ACP] = a UDP-2-N,3-O-bis[(3R)-3-hydroxyacyl]-alpha-D-glucosamine + holo-[ACP] + H(+). The protein operates within bacterial outer membrane biogenesis; LPS lipid A biosynthesis. In terms of biological role, catalyzes the N-acylation of UDP-3-O-acylglucosamine using 3-hydroxyacyl-ACP as the acyl donor. Is involved in the biosynthesis of lipid A, a phosphorylated glycolipid that anchors the lipopolysaccharide to the outer membrane of the cell. The sequence is that of UDP-3-O-acylglucosamine N-acyltransferase from Mannheimia succiniciproducens (strain KCTC 0769BP / MBEL55E).